The following is a 418-amino-acid chain: Maltoporin (418 aa).

An N-terminal signal peptide occupies residues M1–A26.

It belongs to the porin LamB (TC 1.B.3) family. In terms of assembly, homotrimer formed of three 18-stranded antiparallel beta-barrels, containing three independent channels.

The protein resides in the cell outer membrane. The catalysed reaction is beta-maltose(in) = beta-maltose(out). Involved in the transport of maltose and maltodextrins. The polypeptide is Maltoporin (Photobacterium profundum (strain SS9)).